The primary structure comprises 976 residues: Collagen alpha-1(I) chain (976 aa).

The residue at position 1 (Ser-1) is a Phosphoserine. Residues 1–976 form a disordered region; it reads SAGGISVPGP…PGPPGPPGPP (976 aa). Pro-20, Pro-23, Pro-26, Pro-35, Pro-38, Pro-41, Pro-55, Pro-70, Pro-76, Pro-85, and Pro-91 each carry 4-hydroxyproline. Residues 58–72 are compositionally biased toward basic and acidic residues; it reads NGDDGEAGKPGRPGE. A 5-hydroxylysine; alternate modification is found at Lys-94. Lys-94 carries an O-linked (Gal...) hydroxylysine; alternate glycan. At Ser-100 the chain carries Phosphoserine. Low complexity-rich tracts occupy residues 108 to 118 and 132 to 150; these read DAGPAGPKGAP and PGAS…TGAA. 4-hydroxyproline is present on residues Pro-118, Pro-132, Pro-153, Pro-162, Pro-165, Pro-192, Pro-195, Pro-207, Pro-213, Pro-222, Pro-228, Pro-231, and Pro-246. The segment covering 152–164 has biased composition (pro residues); it reads PPGPTGPAGPPGF. A compositionally biased stretch (low complexity) spans 198 to 237; that stretch reads AGAAGPAGNPGADGQPGAKGANGAPGIAGAPGFPGARGPS. Residue Lys-249 is modified to 5-hydroxylysine. Pro-255, Pro-258, Pro-266, Pro-275, Pro-290, Pro-296, Pro-304, and Pro-310 each carry 4-hydroxyproline. Residues 294 to 308 show a composition bias toward gly residues; sequence GLPGPGERGGPGSRG. Lys-319 is modified (5-hydroxylysine). Pro-328, Pro-337, Pro-343, Pro-349, Pro-358, Pro-361, Pro-370, Pro-379, Pro-385, Pro-397, Pro-406, Pro-415, Pro-418, Pro-436, Pro-453, Pro-459, Pro-465, Pro-471, Pro-477, Pro-483, Pro-495, Pro-504, Pro-517, Pro-523, and Pro-532 each carry 4-hydroxyproline. Low complexity predominate over residues 352–378; sequence KGLTGSPGSPGPDGKTGPPGPAGQDGR. A compositionally biased stretch (low complexity) spans 387–406; it reads ARGQAGVMGFPGPKGAAGEP. A compositionally biased stretch (low complexity) spans 465 to 474; sequence PGEAGKPGEQ. Lys-544 is subject to 5-hydroxylysine. 4-hydroxyproline occurs at positions 550, 565, and 571. Positions 577-591 are enriched in low complexity; the sequence is SGPSGPAGPTGARGA. Residue Ser-580 is modified to Phosphoserine. 4-hydroxyproline is present on residues Pro-592, Pro-598, Pro-601, Pro-610, Pro-616, Pro-634, Pro-643, and Pro-652. Low complexity predominate over residues 604–631; sequence AGFAGPPGADGQPGAKGEPGDAGAKGDA. Lys-655 carries the 5-hydroxylysine modification. Low complexity predominate over residues 660–676; it reads SAGPPGATGFPGAAGRV. Residues Pro-664 and Pro-670 each carry the 4-hydroxyproline modification. Pro-678 is modified (3-hydroxyproline). A 4-hydroxyproline mark is found at Pro-679, Pro-688, Pro-691, Pro-718, Pro-726, Pro-735, Pro-753, Pro-762, Pro-765, Pro-771, Pro-786, Pro-792, Pro-798, Pro-806, and Pro-812. The span at 723–735 shows a compositional bias: low complexity; it reads KGSPGADGPAGAP. Residues 785 to 795 show a composition bias toward pro residues; that stretch reads PPGPMGPPGLA. Residue Lys-821 is modified to 5-hydroxylysine. A compositionally biased stretch (pro residues) spans 829–844; it reads PGPPGAPGAPGAPGPV. Pro-832, Pro-835, and Pro-838 each carry 4-hydroxyproline. Low complexity predominate over residues 864–878; the sequence is AGPAGARGPAGPQGP. Basic and acidic residues predominate over residues 879–893; it reads RGDKGETGEQGDRGI. Lys-882 bears the 5-hydroxylysine mark. Residue Lys-894 is modified to 5-hydroxylysine; alternate. A glycan (O-linked (Gal...) hydroxylysine; alternate) is linked at Lys-894. 4-hydroxyproline is present on residues Pro-907, Pro-910, Pro-928, and Pro-943. Over residues 910-943 the composition is skewed to low complexity; the sequence is PGEQGPSGASGPAGPRGPPGSAGSPGKDGLNGLP. Pro-948 carries the post-translational modification 3-hydroxyproline. 4-hydroxyproline is present on Pro-949. Pro residues predominate over residues 961 to 976; that stretch reads VGPPGPPGPPGPPGPP. Residue Pro-963 is modified to 3-hydroxyproline. 4-hydroxyproline is present on Pro-964. Pro-966 is modified (3-hydroxyproline). Pro-967 is modified (4-hydroxyproline). Residue Pro-969 is modified to 3-hydroxyproline. Pro-970, Pro-973, and Pro-976 each carry 4-hydroxyproline.

The protein belongs to the fibrillar collagen family. Trimers of one alpha 2(I) and two alpha 1(I) chains. Post-translationally, contains mostly 4-hydroxyproline. Proline residues at the third position of the tripeptide repeating unit (G-X-Y) are hydroxylated in some or all of the chains. Contains 3-hydroxyproline at a few sites. This modification occurs on the first proline residue in the sequence motif Gly-Pro-Hyp, where Hyp is 4-hydroxyproline. In terms of processing, lysine residues at the third position of the tripeptide repeating unit (G-X-Y) are 5-hydroxylated in some or all of the chains. Post-translationally, O-glycosylated on hydroxylated lysine residues. The O-linked glycan consists of a Glc-Gal disaccharide. As to expression, expressed in bones.

The protein resides in the secreted. It is found in the extracellular space. It localises to the extracellular matrix. Functionally, type I collagen is a member of group I collagen (fibrillar forming collagen). This Acratocnus ye (Hispaniolan ground sloth) protein is Collagen alpha-1(I) chain.